A 2211-amino-acid polypeptide reads, in one-letter code: Coagulation factor V (2211 aa).

An N-terminal signal peptide occupies residues 1–28 (MFLACPGFWVLVVLGSSWAGWGNLGAEA). Plastocyanin-like domains lie at 30–193 (KLRQ…LLIC), 203–327 (TQKM…IDIK), 348–525 (KRWE…LLIC), and 535–686 (IQRA…FRDA). 2 F5/8 type A domains span residues 30 to 327 (KLRQ…IDIK) and 348 to 686 (KRWE…FRDA). 2 residues coordinate Ca(2+): Asp-139 and Asp-140. Cysteines 167 and 193 form a disulfide. 5 N-linked (GlcNAc...) asparagine glycosylation sites follow: Asn-225, Asn-239, Asn-297, Asn-382, and Asn-460. The cysteines at positions 248 and 329 are disulfide-linked. A disulfide bridge connects residues Cys-499 and Cys-525. Asn-553 and Asn-587 each carry an N-linked (GlcNAc...) asparagine glycan. Cys-607 and Cys-688 are oxidised to a cystine. Thr-644 bears the Phosphothreonine mark. Residues 696–1564 (SYEIIYEPSG…PDNIAAWYLR (869 aa)) are b. 3 positions are modified to sulfotyrosine: Tyr-697, Tyr-701, and Tyr-730. The propeptide at 742–1564 (SFRNSSLNQE…PDNIAAWYLR (823 aa)) is activation peptide (connecting region). Residues Asn-745, Asn-756, Asn-774, and Asn-780 are each glycosylated (N-linked (GlcNAc...) asparagine). Positions 814–844 (LEHAGLDKNSALNPPMAEHSSPYSEDPREDH) are disordered. N-linked (GlcNAc...) asparagine glycosylation is found at Asn-902, Asn-952, and Asn-964. Over residues 954 to 969 (TVNKLPNSPQNDSRTW) the composition is skewed to polar residues. The disordered stretch occupies residues 954-1039 (TVNKLPNSPQ…PLSPRSFHPL (86 aa)). A compositionally biased stretch (basic and acidic residues) spans 995–1009 (PLQDRQDRRNSRLKE). 6 N-linked (GlcNAc...) asparagine glycosylation sites follow: Asn-1044, Asn-1053, Asn-1062, Asn-1071, Asn-1078, and Asn-1094. Disordered regions lie at residues 1084–1162 (SLPD…IPNY) and 1195–1471 (QPSI…FGQT). Composition is skewed to polar residues over residues 1091–1103 (TSPN…TSSP) and 1127–1160 (THST…SQIP). Tandem repeats lie at residues 1124-1137 (SDPT…SNRS), 1138-1151 (PDPT…SNRS), 1188-1196 (ATSLDLSQP), 1197-1205 (SISPDLGQM), 1206-1214 (ALSPDPGQE), 1215-1223 (SLSPDLGQT), 1224-1232 (SLSPDLSQE), 1233-1241 (SLSPDLGQT), 1242-1250 (ALSPDPSQE), 1251-1259 (SLSPDLGQT), 1260-1268 (ALSPDPSQE), 1269-1277 (SLSPDLGQT), 1278-1286 (ALSPDPGQE), 1287-1295 (SLSPDLGQT), 1296-1304 (SLSPDLSQE), 1305-1313 (SLSPDLGQT), 1314-1322 (ALSPDPSQE), 1323-1331 (SLSPDLGQT), 1332-1340 (ALSPDPSQE), 1341-1349 (SLSPDLGQT), 1350-1358 (SLSPDLGQE), 1359-1367 (SLSPDLGQT), 1368-1376 (ALSPDPSQE), 1377-1385 (SLSPDLGQT), 1386-1394 (SLSPDLGQE), 1395-1403 (SLSPDLGQT), 1404-1412 (ALSPDLSQE), 1413-1421 (SLSPDLGQT), 1422-1430 (PLSPDLSLE), and 1431-1439 (SLSPDLSQL). The segment at 1124 to 1151 (SDPTHSTTAPSNRSPDPTHSTTAPSNRS) is 2 X 14 AA tandem repeats. Residues 1188–1453 (ATSLDLSQPS…TSPPLDLNQT (266 aa)) form a 30 X 9 AA approximate tandem repeats of [AS]-L-S-P-D-[LP]-[GS]-Q-[TE] region. 8 stretches are compositionally biased toward polar residues: residues 1214-1234 (ESLS…QESL), 1241-1252 (TALSPDPSQESL), 1259-1270 (TALSPDPSQESL), 1286-1306 (ESLS…QESL), 1313-1324 (TALSPDPSQESL), 1331-1352 (TALS…TSLS), 1367-1388 (TALS…TSLS), and 1403-1414 (TALSPDLSQESL). The segment covering 1422–1441 (PLSPDLSLESLSPDLSQLDL) has biased composition (low complexity). The 2-29; truncated repeat unit spans residues 1440-1444 (DLKQT). Residues 1442-1463 (KQTSPPLDLNQTSHTSESSQSL) are compositionally biased toward polar residues. The stretch at 1445-1453 (SPPLDLNQT) is one 2-30 repeat. N-linked (GlcNAc...) asparagine glycosylation is found at Asn-1451 and Asn-1490. Tyr-1513, Tyr-1529, Tyr-1537, and Tyr-1541 each carry sulfotyrosine. N-linked (GlcNAc...) asparagine glycosylation is found at Asn-1550 and Asn-1690. 2 Plastocyanin-like domains span residues 1569 to 1738 (NRKY…LLIC) and 1748 to 1890 (NMPV…FLIV). Residues 1569 to 1890 (NRKYYYIAAE…AGMQTPFLIV (322 aa)) form the F5/8 type A 3 domain. Cys-1712 and Cys-1738 form a disulfide bridge. Cu cation contacts are provided by His-1830 and His-1832. Asn-1839 is a glycosylation site (N-linked (GlcNAc...) asparagine). Asp-1872 serves as a coordination point for Cu cation. Disulfide bonds link Cys-1894-Cys-2048 and Cys-2053-Cys-2208. F5/8 type C domains are found at residues 1894 to 2048 (CKMP…LQGC) and 2053 to 2208 (CSTP…LFGC). Asn-1997 and Asn-2196 each carry an N-linked (GlcNAc...) asparagine glycan.

The protein belongs to the multicopper oxidase family. As to quaternary structure, factor Va, the activated form of factor V, is composed of a heavy chain and a light chain, non-covalently bound. The interaction between the two chains is calcium-dependent. Forms heterodimer with SERPINA5. Post-translationally, thrombin activates factor V proteolytically to the active cofactor, factor Va (formation of a heavy chain at the N-terminus and a light chain at the C-terminus). In terms of processing, sulfation is required for efficient thrombin cleavage and activation and for full procoagulant activity. Activated protein C inactivates factor V and factor Va by proteolytic degradation.

It is found in the secreted. With respect to regulation, inhibited by SERPINA5. In terms of biological role, central regulator of hemostasis. It serves as a critical cofactor for the prothrombinase activity of factor Xa that results in the activation of prothrombin to thrombin. This Bos taurus (Bovine) protein is Coagulation factor V (F5).